Here is a 393-residue protein sequence, read N- to C-terminus: UPF0496 protein At2g18630 (393 aa).

Residues 1–20 (MMGGKSSKSKKNVEFGSPST) are disordered. The stretch at 149 to 222 (VNQFEEENED…RLRNIKTWRR (74 aa)) forms a coiled coil. The next 2 helical transmembrane spans lie at 226-246 (MVFV…AAVA) and 249-269 (PVVA…GKWC). A coiled-coil region spans residues 299–356 (KEMDNISILVRKVEVEIESLLKKAEFAITEEKEVRLAIDEIKKKLDVFTETIEELGEH).

Belongs to the UPF0496 family.

It localises to the membrane. The protein is UPF0496 protein At2g18630 of Arabidopsis thaliana (Mouse-ear cress).